The sequence spans 172 residues: 3-hydroxydecanoyl-[acyl-carrier-protein] dehydratase (172 aa).

Residue histidine 71 is part of the active site.

This sequence belongs to the thioester dehydratase family. FabA subfamily. In terms of assembly, homodimer.

It localises to the cytoplasm. The enzyme catalyses a (3R)-hydroxyacyl-[ACP] = a (2E)-enoyl-[ACP] + H2O. The catalysed reaction is (3R)-hydroxydecanoyl-[ACP] = (2E)-decenoyl-[ACP] + H2O. It carries out the reaction (2E)-decenoyl-[ACP] = (3Z)-decenoyl-[ACP]. It participates in lipid metabolism; fatty acid biosynthesis. Necessary for the introduction of cis unsaturation into fatty acids. Catalyzes the dehydration of (3R)-3-hydroxydecanoyl-ACP to E-(2)-decenoyl-ACP and then its isomerization to Z-(3)-decenoyl-ACP. Can catalyze the dehydratase reaction for beta-hydroxyacyl-ACPs with saturated chain lengths up to 16:0, being most active on intermediate chain length. The sequence is that of 3-hydroxydecanoyl-[acyl-carrier-protein] dehydratase from Erwinia tasmaniensis (strain DSM 17950 / CFBP 7177 / CIP 109463 / NCPPB 4357 / Et1/99).